An 854-amino-acid polypeptide reads, in one-letter code: Golgin subfamily A member 6-like protein 22 (854 aa).

Disordered regions lie at residues 1–114 (MLMW…HQEA), 320–348 (QEEK…MRRQ), 366–447 (MHEQ…MWRQ), 481–568 (QEEK…MWRQ), 581–681 (RQEE…EQEE), and 714–854 (QEEK…MQEH). Over residues 15–35 (LPTHPHLPTHPHLPTHPHLPT) the composition is skewed to basic residues. Positions 45–66 (MSKETRQSKLAEAKEQLTDHHP) are enriched in basic and acidic residues. Polar residues-rich tracts occupy residues 67–77 (QTNPSVGTAAS) and 85–97 (NNGT…TSGG). Residues 100-114 (SPEDEQKASHQHQEA) are compositionally biased toward basic and acidic residues. Positions 103 to 854 (DEQKASHQHQ…RQQEEKMQEH (752 aa)) form a coiled coil.

The protein belongs to the GOLGA6 family.

The chain is Golgin subfamily A member 6-like protein 22 from Homo sapiens (Human).